We begin with the raw amino-acid sequence, 148 residues long: Universal stress protein YxiE (148 aa).

Residues 1–18 form the signal peptide; sequence MFNKMLVAIDGSDMSAKA.

The protein belongs to the universal stress protein A family.

The protein is Universal stress protein YxiE (yxiE) of Bacillus subtilis (strain 168).